The primary structure comprises 573 residues: MAAAQTFNSNCDPGNFHKLQSFPSESVTYTCKMGSVSSLIDKQDFPHDGFNLDFKPFPEPNCKRGLHQKELLSYLNITKKEVKSNKKFHSGLGFRREHSVEGGENDYPVFYHKDHRGTEFSKSSLPERGHLDKSRFGPSALRSNVKAFMSIQSLYQSGNKLSKSNGSLNTMSCVSSPPCRGPLQPSNSHSNNQSESGNDEEDDSLSDSRQNSINSLNSYSPGFSVARGQISASLGHINHIGGSLDQASRGTRDTMAGEKGTLSCRSMATLSRLQCSGEPPPPYEYSQSVEDVARQLEERLHEKGMEARQLRRNASDNDDPFTKVFEDKRRLWMEELDELKQMYMSKLQQISQQALRSQRALQLQLYKVQQEKKRLQEELNSLRGESEELRQKQSQSDNSGPKLEDSKWEISQKAGEISLLKQQLRDSQAEINQKLGEVVSLKSQLREAKVLVKEKEKESAELSTRLQALENAKSQAPVDLPRDNSDTIDLERLRAELMLERRQNEAQMLTFETERKVWKEEKDKVLRYQKEIQSSYREMYHRNQVLERQVLELRQGVGQSPSSPAIWMDTVET.

Disordered stretches follow at residues 168–216 and 382–407; these read LNTM…INSL and LRGESEELRQKQSQSDNSGPKLEDSK. Composition is skewed to polar residues over residues 184–196 and 207–216; these read QPSNSHSNNQSES and DSRQNSINSL. Positions 289–539 form a coiled coil; sequence VEDVARQLEE…KEIQSSYREM (251 aa).

It belongs to the N4BP3 family.

It is found in the cytoplasmic vesicle. It localises to the cell projection. The protein resides in the axon. The protein localises to the dendrite. Its function is as follows. Plays a role in axon and dendrite arborization during cranial nerve development. Also important for neural crest migration and early development of other anterior structures including eye, brain and cranial cartilage. In Xenopus laevis (African clawed frog), this protein is NEDD4-binding protein 3-A.